The chain runs to 425 residues: 3-phosphoshikimate 1-carboxyvinyltransferase (425 aa).

Residues K20, S21, and R25 each coordinate 3-phosphoshikimate. Residue K20 participates in phosphoenolpyruvate binding. Residues G92 and R120 each contribute to the phosphoenolpyruvate site. 3-phosphoshikimate is bound by residues S165, Q167, D312, and K339. Residue Q167 coordinates phosphoenolpyruvate. The active-site Proton acceptor is D312. The phosphoenolpyruvate site is built by R343 and R385.

The protein belongs to the EPSP synthase family. As to quaternary structure, monomer.

It is found in the cytoplasm. It catalyses the reaction 3-phosphoshikimate + phosphoenolpyruvate = 5-O-(1-carboxyvinyl)-3-phosphoshikimate + phosphate. It participates in metabolic intermediate biosynthesis; chorismate biosynthesis; chorismate from D-erythrose 4-phosphate and phosphoenolpyruvate: step 6/7. Its function is as follows. Catalyzes the transfer of the enolpyruvyl moiety of phosphoenolpyruvate (PEP) to the 5-hydroxyl of shikimate-3-phosphate (S3P) to produce enolpyruvyl shikimate-3-phosphate and inorganic phosphate. This is 3-phosphoshikimate 1-carboxyvinyltransferase from Alkaliphilus metalliredigens (strain QYMF).